Here is a 55-residue protein sequence, read N- to C-terminus: uncharacterized protein (55 aa).

This is an uncharacterized protein from Saccharomyces cerevisiae (strain ATCC 204508 / S288c) (Baker's yeast).